The sequence spans 486 residues: ATP-dependent rRNA helicase rrp3 (486 aa).

The disordered stretch occupies residues 1-60; it reads MSSVKRRKTDKNPSLEGLKSKKTKESKKESHTPSPEPIEDTEDNRVIEETEEAEEDDAPK. The Q motif motif lies at 60 to 88; the sequence is KSFKDLGIVDSLCEACDTLGYKAPTPIQR. A Helicase ATP-binding domain is found at 91 to 262; sequence IPLALQGRDL…RASLKDPLRV (172 aa). 104 to 111 is an ATP binding site; the sequence is AETGSGKT. Residues 210-213 carry the DEAD box motif; it reads DEAD. Residues 286-434 enclose the Helicase C-terminal domain; the sequence is HKDTYLIYLL…EYPTVKDEVM (149 aa). Basic and acidic residues-rich tracts occupy residues 447–460 and 476–486; these read ARNEMKNLHEDRGK and RGRDEMDREEG. A disordered region spans residues 447–486; sequence ARNEMKNLHEDRGKKGAVLKGRRPANGAKRGRDEMDREEG.

Belongs to the DEAD box helicase family. DDX47/RRP3 subfamily. As to quaternary structure, interacts with the SSU processome.

Its subcellular location is the nucleus. The catalysed reaction is ATP + H2O = ADP + phosphate + H(+). In terms of biological role, ATP-dependent rRNA helicase required for pre-ribosomal RNA processing. Involved in the maturation of the 35S-pre-rRNA and to its cleavage to mature 18S rRNA. This is ATP-dependent rRNA helicase rrp3 from Botryotinia fuckeliana (strain B05.10) (Noble rot fungus).